Reading from the N-terminus, the 241-residue chain is Transforming protein p29 (241 aa).

Positions Met1–Ala41 are disordered. Residues Cys233 and Cys236 are each lipidated (S-palmitoyl cysteine; by host). The residue at position 238 (Cys238) is a Cysteine methyl ester; by host. A lipid anchor (S-farnesyl cysteine; by host) is attached at Cys238. The propeptide at Val239–Ser241 is removed in mature form.

The protein belongs to the small GTPase superfamily. Ras family.

Its subcellular location is the host cell membrane. It carries out the reaction GTP + H2O = GDP + phosphate + H(+). With respect to regulation, alternates between an inactive form bound to GDP and an active form bound to GTP. Activated by a guanine nucleotide-exchange factor (GEF) and inactivated by a GTPase-activating protein (GAP). This chain is Transforming protein p29 (H-RAS), found in Mus musculus (Mouse).